The sequence spans 62 residues: Conotoxin Tx5.1 (62 aa).

The first 22 residues, Met-1–Ala-22, serve as a signal peptide directing secretion. The propeptide occupies Gln-23–Arg-49. A Glutamine amide modification is found at Gln-60.

It belongs to the conotoxin T superfamily. Contains 2 disulfide bonds that can be either 'C1-C3, C2-C4' or 'C1-C4, C2-C3', since these disulfide connectivities have been observed for conotoxins with cysteine framework V (for examples, see AC P0DQQ7 and AC P81755). As to expression, expressed by the venom duct.

It localises to the secreted. This chain is Conotoxin Tx5.1, found in Conus textile (Cloth-of-gold cone).